The primary structure comprises 88 residues: Outer membrane protein H.8 (88 aa).

The N-terminal stretch at 1–17 (MKKSLFAAALLSLALAA) is a signal peptide. Residue cysteine 18 is the site of N-palmitoyl cysteine attachment. Cysteine 18 carries S-diacylglycerol cysteine lipidation. 13 repeat units span residues 23-27 (AAEAP), 28-32 (AAEAS), 33-37 (STEAP), 38-42 (AAEAP), 43-47 (AAEAP), 48-52 (AAEAA), 53-57 (AAEAP), 58-62 (AAEAP), 63-67 (AAEAP), 68-72 (AAEAA), 73-77 (ATEAP), 78-82 (AAEAP), and 83-87 (AAEAA). Residues 23–87 (AAEAPAAEAS…AAEAPAAEAA (65 aa)) form a 13 X 5 AA tandem repeats of [AS]-[AT]-E-A-[PAS] region. The interval 23-88 (AAEAPAAEAS…AEAPAAEAAK (66 aa)) is disordered. Over residues 25–88 (EAPAAEASST…AEAPAAEAAK (64 aa)) the composition is skewed to low complexity.

It localises to the cell outer membrane. This is Outer membrane protein H.8 from Neisseria gonorrhoeae (strain ATCC 700825 / FA 1090).